The sequence spans 467 residues: Uronate isomerase (467 aa).

The protein belongs to the metallo-dependent hydrolases superfamily. Uronate isomerase family.

The enzyme catalyses D-glucuronate = D-fructuronate. The catalysed reaction is aldehydo-D-galacturonate = keto-D-tagaturonate. It functions in the pathway carbohydrate metabolism; pentose and glucuronate interconversion. The chain is Uronate isomerase from Staphylococcus haemolyticus (strain JCSC1435).